We begin with the raw amino-acid sequence, 744 residues long: Integrator complex subunit 11 homolog (744 aa).

Zn(2+) contacts are provided by H67, H69, D71, H72, H156, and D177. An HXHXDH motif motif is present at residues H67–H72. E202 is an active-site residue. Residue H425 participates in Zn(2+) binding. A disordered region spans residues N626 to N669.

It belongs to the metallo-beta-lactamase superfamily. RNA-metabolizing metallo-beta-lactamase-like family. INTS11 subfamily. Component of the Integrator complex. The core complex associates with protein phosphatase 2A subunits, to form the Integrator-PP2A (INTAC) complex. Zn(2+) serves as cofactor.

The protein localises to the nucleus. It localises to the cytoplasm. In terms of biological role, RNA endonuclease component of the integrator complex, a multiprotein complex that terminates RNA polymerase II (Pol II) transcription in the promoter-proximal region of genes. The integrator complex provides a quality checkpoint during transcription elongation by driving premature transcription termination of transcripts that are unfavorably configured for transcriptional elongation: the complex terminates transcription by (1) catalyzing dephosphorylation of the C-terminal domain (CTD) of Pol II subunit polr2a, (2) degrading the exiting nascent RNA transcript via endonuclease activity and (3) promoting the release of Pol II from bound DNA. The integrator complex is also involved in terminating the synthesis of non-coding Pol II transcripts, such as enhancer RNAs (eRNAs), small nuclear RNAs (snRNAs), telomerase RNAs and long non-coding RNAs (lncRNAs). Within the integrator complex, INTS11 constitutes the RNA endonuclease subunit that degrades exiting nascent RNA transcripts. This chain is Integrator complex subunit 11 homolog (ints11), found in Dictyostelium discoideum (Social amoeba).